A 100-amino-acid chain; its full sequence is MKKIVFLILGLAAFAFGADGEMIRSYSVIAGGIGLGLAALGGAIGMGNTAAATISGTARNPGVGSKLMTTMFIALAMIEAQVIYALVITLIVLYANPMLG.

2 helical membrane passes run 27-47 (SVIA…IGMG) and 72-92 (FIAL…TLIV).

The protein belongs to the ATPase C chain family. In terms of assembly, F-type ATPases have 2 components, F(1) - the catalytic core - and F(0) - the membrane proton channel. F(1) has five subunits: alpha(3), beta(3), gamma(1), delta(1), epsilon(1). F(0) has three main subunits: a(1), b(2) and c(10-14). The alpha and beta chains form an alternating ring which encloses part of the gamma chain. F(1) is attached to F(0) by a central stalk formed by the gamma and epsilon chains, while a peripheral stalk is formed by the delta and b chains.

The protein localises to the cell inner membrane. Functionally, f(1)F(0) ATP synthase produces ATP from ADP in the presence of a proton or sodium gradient. F-type ATPases consist of two structural domains, F(1) containing the extramembraneous catalytic core and F(0) containing the membrane proton channel, linked together by a central stalk and a peripheral stalk. During catalysis, ATP synthesis in the catalytic domain of F(1) is coupled via a rotary mechanism of the central stalk subunits to proton translocation. Key component of the F(0) channel; it plays a direct role in translocation across the membrane. A homomeric c-ring of between 10-14 subunits forms the central stalk rotor element with the F(1) delta and epsilon subunits. The protein is ATP synthase subunit c of Campylobacter concisus (strain 13826).